A 309-amino-acid chain; its full sequence is Zinc transporter ZIP2 (309 aa).

The Extracellular segment spans residues 1–8 (MEVLLGVK). The helical transmembrane segment at 9 to 29 (IGCLLALLVLTLGCGLTPIYV) threads the bilayer. The Cytoplasmic segment spans residues 30-43 (KWFQMDAATGHHHR). A helical transmembrane segment spans residues 44 to 64 (VLSLLGCTSAGVFLGAGLMHM). Residues 65–103 (TAEALEGIESEIQKFVEQNSTGSKGNSSRDAASSYVEYP) lie on the Extracellular side of the membrane. A helical transmembrane segment spans residues 104 to 124 (YGELVISLGFFFVFLLESLAL). Residues 125–164 (QCCHGAAGGSTVQEEEWGGTHAFGFHKHPAVPSPSRGPLR) are Cytoplasmic-facing. Residues 165–185 (ALVLLLSLSFHSVFEGLAVGL) form a helical membrane-spanning segment. The Zn(2+) site is built by His-175 and Glu-179. Over 186–191 (QATVAA) the chain is Extracellular. A helical transmembrane segment spans residues 192–212 (TIQLCVAVLAHKGLVVFSVGL). His-202 lines the Zn(2+) pocket. Topologically, residues 213-225 (RLGKIGTGPRWAT) are cytoplasmic. A helical membrane pass occupies residues 226-246 (FCILSLALMSPVGLALGLTVA). The Extracellular segment spans residues 247 to 258 (GGASGQTQGLAQ). Residues 259–279 (AVLEGIAAGTFLYVTFLEILP) traverse the membrane as a helical segment. Residue Glu-276 participates in Zn(2+) binding. Over 280–288 (RELACPEAP) the chain is Cytoplasmic. A helical transmembrane segment spans residues 289–309 (LAKYSCVAAGFAFMALIALWA).

The protein belongs to the ZIP transporter (TC 2.A.5) family. In terms of tissue distribution, high expression in the liver, skin and ovary.

Its subcellular location is the cell membrane. The enzyme catalyses Zn(2+)(in) = Zn(2+)(out). It carries out the reaction Cd(2+)(in) = Cd(2+)(out). Functionally, transporter for the divalent cation Zn(2+). Mediates the influx of Zn(2+) into cells from extracellular space. The Zn(2+) uniporter activity is independent of H(+)-driving force, but is modulated by extracellular pH and membrane potential. Transports also other divalent cations Zn(2+), Cd2(+), Cu2(+), Co2(+) in the order of decreasing affinity, respectively. In the skin, aids in the differentiation of keratinocytes in the epidermis. The sequence is that of Zinc transporter ZIP2 (Slc39a2) from Mus musculus (Mouse).